The chain runs to 205 residues: tRNA 2-(methylsulfanyl)-N(6)-isopentenyladenosine(37) hydroxylase (205 aa).

6 residues coordinate Fe cation: Glu38, Glu69, His72, Glu122, Glu151, and His154.

Belongs to the MiaE family. Homodimer. It depends on Fe cation as a cofactor.

The enzyme catalyses 2-methylsulfanyl-N(6)-dimethylallyladenosine(37) in tRNA + AH2 + O2 = N(6)-[(2E)-4-hydroxy-3-methylbut-2-en-1-yl]-2-(methylsulfanyl)adenosine(37) in tRNA + A + H2O. It functions in the pathway tRNA modification; 2-methylthio-N-6-(cis-hydroxy)isopentenyl adenosine-tRNA biosynthesis. In terms of biological role, involved in specific tRNA modification. Catalyzes the oxygen-dependent hydroxylation of 2-methylthio-N-6-isopentenyl adenosine (ms2i6A) to produce 2-methylthio-N-6-(cis-hydroxy)isopentenyl adenosine (ms2io6A) at position 37 in tRNAs. The chain is tRNA 2-(methylsulfanyl)-N(6)-isopentenyladenosine(37) hydroxylase from Pseudomonas putida (strain ATCC 47054 / DSM 6125 / CFBP 8728 / NCIMB 11950 / KT2440).